A 443-amino-acid polypeptide reads, in one-letter code: MKLFDDRGDAGRQLAQRLAQLSGKAVVVLGLPRGGVPVAFEVAKSLQAPLDVLVVRKLGVPFQPELAFGAIGEDGVRVLNDDVVRGTHLDAAAMDAVERKQLIELQRRAERFRRGRDRIPLTGRIAVIVDDGIATGATAKAACQVARAHGADKVVLAVPIGPDDIVARFAGYADEVVCLATPALFFAVGQGYRNFTQTSDDEVVAFLDRAHRDFAEAGAIDAAADPPLRDEEVQVVAGPVPVAGHLTVPEKPRGIVVFAHGSGSSRHSIRNRYVAEVLTGAGFATLLFDLLTPEEERNRANVFDIELLASRLIDVTGWLATQPDTASLPVGYFGASTGAGAALVAAADPRVNVRAVVSRGGRPDLAGDSLGSVVAPTLLIVGGRDQVVLELNQRAQAVIPGKCQLTVVPGATHLFEEPGTLEQVAKLACDWFIDHLCGPGPSG.

The protein in the N-terminal section; belongs to the purine/pyrimidine phosphoribosyltransferase family. In the C-terminal section; belongs to the dienelactone hydrolase family.

The protein is Putative phosphoribosyl transferase MT0597 of Mycobacterium tuberculosis (strain CDC 1551 / Oshkosh).